Reading from the N-terminus, the 159-residue chain is Ribosomal RNA large subunit methyltransferase H (159 aa).

S-adenosyl-L-methionine contacts are provided by residues Leu-76, Gly-108, and 127-132; that span reads FGLLTF.

This sequence belongs to the RNA methyltransferase RlmH family. In terms of assembly, homodimer.

It localises to the cytoplasm. It catalyses the reaction pseudouridine(1915) in 23S rRNA + S-adenosyl-L-methionine = N(3)-methylpseudouridine(1915) in 23S rRNA + S-adenosyl-L-homocysteine + H(+). Functionally, specifically methylates the pseudouridine at position 1915 (m3Psi1915) in 23S rRNA. The protein is Ribosomal RNA large subunit methyltransferase H of Streptococcus thermophilus (strain CNRZ 1066).